The primary structure comprises 535 residues: Calcium-dependent protein kinase 7 (535 aa).

The segment at 1-29 (MGNCCGNPSSATNQSKQGKPKNKNNPFYS) is disordered. Residue Gly2 is the site of N-myristoyl glycine attachment. Residues 59 to 317 (YDLGREVGRG…AAQVLEHTWI (259 aa)) enclose the Protein kinase domain. ATP-binding positions include 65 to 73 (VGRGEFGIT) and Lys88. Asp183 (proton acceptor) is an active-site residue. Ser223 is subject to Phosphoserine. Positions 323–353 (APNVSLGETVKARLKQFSVMNKLKKRALRVI) are autoinhibitory domain. EF-hand domains are found at residues 360–395 (EEAAGIKEAFEMMDVNKRGKINLEELKYGLQKAGQQ), 396–431 (IADTDLQILMEATDVDGDGTLNYSEFVAVSVHLKKM), 432–467 (ANDEHLHKAFNFFDQNQSGYIEIDELREALNDELDN), and 468–504 (TSSEEVIAAIMQDVDTDKDGRISYEEFVAMMKAGTDW). Positions 373, 375, 379, 384, 409, 411, 413, 415, 420, 445, 447, 449, 451, 456, 482, 484, 486, and 488 each coordinate Ca(2+). Ser490 is modified (phosphoserine). Position 493 (Glu493) interacts with Ca(2+).

It belongs to the protein kinase superfamily. Ser/Thr protein kinase family. CDPK subfamily.

It is found in the cell membrane. The enzyme catalyses L-seryl-[protein] + ATP = O-phospho-L-seryl-[protein] + ADP + H(+). It carries out the reaction L-threonyl-[protein] + ATP = O-phospho-L-threonyl-[protein] + ADP + H(+). With respect to regulation, activated by calcium. Autophosphorylation may play an important role in the regulation of the kinase activity. In terms of biological role, may play a role in signal transduction pathways that involve calcium as a second messenger. The sequence is that of Calcium-dependent protein kinase 7 (CPK7) from Arabidopsis thaliana (Mouse-ear cress).